Consider the following 181-residue polypeptide: UPF0177 protein YbdI (181 aa).

5 helical membrane passes run 10–30 (ILFL…GVFA), 41–61 (LLWL…AHYL), 81–101 (FVDS…IAPI), 114–134 (FFSH…LIHT), and 161–181 (SDSI…HIII).

The protein belongs to the UPF0177 family.

It is found in the cell membrane. The protein is UPF0177 protein YbdI (ybdI) of Lactococcus lactis subsp. lactis (strain IL1403) (Streptococcus lactis).